The primary structure comprises 363 residues: Cobalt-precorrin-5B C(1)-methyltransferase (363 aa).

The protein belongs to the CbiD family.

It catalyses the reaction Co-precorrin-5B + S-adenosyl-L-methionine = Co-precorrin-6A + S-adenosyl-L-homocysteine. It participates in cofactor biosynthesis; adenosylcobalamin biosynthesis; cob(II)yrinate a,c-diamide from sirohydrochlorin (anaerobic route): step 6/10. Functionally, catalyzes the methylation of C-1 in cobalt-precorrin-5B to form cobalt-precorrin-6A. This Burkholderia pseudomallei (strain K96243) protein is Cobalt-precorrin-5B C(1)-methyltransferase.